The primary structure comprises 1025 residues: Kinesin-like protein KIN-14P (1025 aa).

Disordered regions lie at residues 1-87 (MNPM…MHHG) and 263-286 (YSQIESQTKTEKSKWEEQKKNEEE). A compositionally biased stretch (low complexity) spans 15 to 28 (STPRSPFSPFSPLS). The segment covering 29 to 41 (VDDRHRNHADTKT) has biased composition (basic and acidic residues). A compositionally biased stretch (low complexity) spans 42–53 (PRSPFSPFSPLS). The segment covering 65 to 75 (KFQQALASSGQ) has biased composition (polar residues). The stretch at 203-425 (HEIATQQLRQ…REMEKKSESN (223 aa)) forms a coiled coil. The segment covering 270 to 286 (TKTEKSKWEEQKKNEEE) has biased composition (basic and acidic residues). A Kinesin motor domain is found at 509 to 838 (NIRVFCRVRP…LKFAERVSGV (330 aa)). Position 593-600 (593-600 (GQTGSGKT)) interacts with ATP. The stretch at 847 to 879 (KEGKDVRDLMEQLASLKDTIARKDEEIERLQHQ) forms a coiled coil. Disordered regions lie at residues 881–926 (QRLQ…SAEA), 939–977 (AASMGTQGSIDVTKRPPRISDRAKSVTAKSSTSVTRPLD), and 994–1025 (TGLTSSSKGLASSSIKKTGSTSSLAKSSKRWA). 2 stretches are compositionally biased toward polar residues: residues 901 to 913 (SDTGEYSSQSRYS) and 939 to 948 (AASMGTQGSI). The segment covering 950 to 962 (VTKRPPRISDRAK) has biased composition (basic and acidic residues). Low complexity-rich tracts occupy residues 963 to 974 (SVTAKSSTSVTR) and 998 to 1016 (SSSKGLASSSIKKTGSTSS).

It belongs to the TRAFAC class myosin-kinesin ATPase superfamily. Kinesin family. KIN-14 subfamily.

In Arabidopsis thaliana (Mouse-ear cress), this protein is Kinesin-like protein KIN-14P.